A 63-amino-acid chain; its full sequence is Cytochrome c oxidase subunit 5A, mitochondrial (63 aa).

The protein belongs to the cytochrome c oxidase subunit 5A family. In terms of assembly, component of the cytochrome c oxidase (complex IV, CIV), a multisubunit enzyme composed of a catalytic core of 3 subunits and several supernumerary subunits. The complex exists as a monomer or a dimer and forms supercomplexes (SCs) in the inner mitochondrial membrane with ubiquinol-cytochrome c oxidoreductase (cytochrome b-c1 complex, complex III, CIII).

The protein resides in the mitochondrion inner membrane. Its pathway is energy metabolism; oxidative phosphorylation. Component of the cytochrome c oxidase, the last enzyme in the mitochondrial electron transport chain which drives oxidative phosphorylation. The respiratory chain contains 3 multisubunit complexes succinate dehydrogenase (complex II, CII), ubiquinol-cytochrome c oxidoreductase (cytochrome b-c1 complex, complex III, CIII) and cytochrome c oxidase (complex IV, CIV), that cooperate to transfer electrons derived from NADH and succinate to molecular oxygen, creating an electrochemical gradient over the inner membrane that drives transmembrane transport and the ATP synthase. Cytochrome c oxidase is the component of the respiratory chain that catalyzes the reduction of oxygen to water. Electrons originating from reduced cytochrome c in the intermembrane space (IMS) are transferred via the dinuclear copper A center (CU(A)) of subunit 2 and heme A of subunit 1 to the active site in subunit 1, a binuclear center (BNC) formed by heme A3 and copper B (CU(B)). The BNC reduces molecular oxygen to 2 water molecules using 4 electrons from cytochrome c in the IMS and 4 protons from the mitochondrial matrix. This chain is Cytochrome c oxidase subunit 5A, mitochondrial (COVA), found in Manduca sexta (Tobacco hawkmoth).